We begin with the raw amino-acid sequence, 378 residues long: UDP-N-acetylglucosamine 2-epimerase (378 aa).

His214 is a catalytic residue.

It belongs to the UDP-N-acetylglucosamine 2-epimerase family.

The catalysed reaction is UDP-N-acetyl-alpha-D-glucosamine = UDP-N-acetyl-alpha-D-mannosamine. The protein operates within bacterial outer membrane biogenesis; LPS O-antigen biosynthesis. This is UDP-N-acetylglucosamine 2-epimerase (rfbC) from Salmonella borreze.